Here is a 267-residue protein sequence, read N- to C-terminus: Acetyl-coenzyme A carboxylase carboxyl transferase subunit beta 1 (267 aa).

The region spanning 9–267 (TWQACPKCGR…NYGIGRSAHG (259 aa)) is the CoA carboxyltransferase N-terminal domain. Cysteine 13, cysteine 16, cysteine 31, and cysteine 34 together coordinate Zn(2+). A C4-type zinc finger spans residues 13 to 34 (CPKCGRHVHQRQWGTYQQCPYC).

Belongs to the AccD/PCCB family. Acetyl-CoA carboxylase is a heterohexamer composed of biotin carboxyl carrier protein (AccB), biotin carboxylase (AccC) and two subunits each of ACCase subunit alpha (AccA) and ACCase subunit beta (AccD). Requires Zn(2+) as cofactor.

The protein resides in the cytoplasm. It catalyses the reaction N(6)-carboxybiotinyl-L-lysyl-[protein] + acetyl-CoA = N(6)-biotinyl-L-lysyl-[protein] + malonyl-CoA. The protein operates within lipid metabolism; malonyl-CoA biosynthesis; malonyl-CoA from acetyl-CoA: step 1/1. In terms of biological role, component of the acetyl coenzyme A carboxylase (ACC) complex. Biotin carboxylase (BC) catalyzes the carboxylation of biotin on its carrier protein (BCCP) and then the CO(2) group is transferred by the transcarboxylase to acetyl-CoA to form malonyl-CoA. The chain is Acetyl-coenzyme A carboxylase carboxyl transferase subunit beta 1 from Lactiplantibacillus plantarum (strain JDM1) (Lactobacillus plantarum).